Reading from the N-terminus, the 386-residue chain is Succinate--CoA ligase [ADP-forming] subunit beta (386 aa).

The ATP-grasp domain maps to 9-244; that stretch reads KEILRSFGVP…LDEEDPAEVE (236 aa). Residues Lys46, 53–55, Glu99, Ala102, and Glu107 contribute to the ATP site; that span reads GRG. Residues Asn199 and Asp213 each coordinate Mg(2+). Substrate contacts are provided by residues Asn264 and 321–323; that span reads GIM.

The protein belongs to the succinate/malate CoA ligase beta subunit family. Heterotetramer of two alpha and two beta subunits. It depends on Mg(2+) as a cofactor.

It carries out the reaction succinate + ATP + CoA = succinyl-CoA + ADP + phosphate. It catalyses the reaction GTP + succinate + CoA = succinyl-CoA + GDP + phosphate. It participates in carbohydrate metabolism; tricarboxylic acid cycle; succinate from succinyl-CoA (ligase route): step 1/1. Succinyl-CoA synthetase functions in the citric acid cycle (TCA), coupling the hydrolysis of succinyl-CoA to the synthesis of either ATP or GTP and thus represents the only step of substrate-level phosphorylation in the TCA. The beta subunit provides nucleotide specificity of the enzyme and binds the substrate succinate, while the binding sites for coenzyme A and phosphate are found in the alpha subunit. This Acidovorax ebreus (strain TPSY) (Diaphorobacter sp. (strain TPSY)) protein is Succinate--CoA ligase [ADP-forming] subunit beta.